Reading from the N-terminus, the 624-residue chain is Phosphomethylpyrimidine synthase (624 aa).

Substrate-binding positions include Asn231, Met260, Tyr289, His325, 345–347 (SRG), 386–389 (DGLR), and Glu425. His429 contacts Zn(2+). Tyr452 contributes to the substrate binding site. His493 is a binding site for Zn(2+). Residues Cys573, Cys576, and Cys581 each coordinate [4Fe-4S] cluster.

It belongs to the ThiC family. In terms of assembly, homodimer. [4Fe-4S] cluster is required as a cofactor.

It carries out the reaction 5-amino-1-(5-phospho-beta-D-ribosyl)imidazole + S-adenosyl-L-methionine = 4-amino-2-methyl-5-(phosphooxymethyl)pyrimidine + CO + 5'-deoxyadenosine + formate + L-methionine + 3 H(+). It participates in cofactor biosynthesis; thiamine diphosphate biosynthesis. In terms of biological role, catalyzes the synthesis of the hydroxymethylpyrimidine phosphate (HMP-P) moiety of thiamine from aminoimidazole ribotide (AIR) in a radical S-adenosyl-L-methionine (SAM)-dependent reaction. The polypeptide is Phosphomethylpyrimidine synthase (Myxococcus xanthus (strain DK1622)).